We begin with the raw amino-acid sequence, 116 residues long: Large ribosomal subunit protein uL18 (116 aa).

This sequence belongs to the universal ribosomal protein uL18 family. Part of the 50S ribosomal subunit; part of the 5S rRNA/L5/L18/L25 subcomplex. Contacts the 5S and 23S rRNAs.

Its function is as follows. This is one of the proteins that bind and probably mediate the attachment of the 5S RNA into the large ribosomal subunit, where it forms part of the central protuberance. This Shewanella putrefaciens (strain CN-32 / ATCC BAA-453) protein is Large ribosomal subunit protein uL18.